The following is a 165-amino-acid chain: MASNKRYFSSSSSMLPWLGIAAVLVLLDQITKITITRLFVYGESHAVTSFFNLVLVYNKGAAFSFLASETGWQRYFFTIMGIGAAIFIIYLLKKHAGQRLFCWALALILGGAIGNVIDRVLYGHVIDFLDVHIGGWHWPAFNIADSAICIGAVLFIYDELRRVGK.

The next 4 membrane-spanning stretches (helical) occupy residues 7–27, 46–66, 72–92, and 100–120; these read YFSSSSSMLPWLGIAAVLVLL, AVTSFFNLVLVYNKGAAFSFL, WQRYFFTIMGIGAAIFIIYLL, and LFCWALALILGGAIGNVIDRV. Residues Asp-127 and Asp-145 contribute to the active site. The chain crosses the membrane as a helical span at residues 136–156; it reads WHWPAFNIADSAICIGAVLFI.

This sequence belongs to the peptidase A8 family.

Its subcellular location is the cell inner membrane. It carries out the reaction Release of signal peptides from bacterial membrane prolipoproteins. Hydrolyzes -Xaa-Yaa-Zaa-|-(S,diacylglyceryl)Cys-, in which Xaa is hydrophobic (preferably Leu), and Yaa (Ala or Ser) and Zaa (Gly or Ala) have small, neutral side chains.. It participates in protein modification; lipoprotein biosynthesis (signal peptide cleavage). Its function is as follows. This protein specifically catalyzes the removal of signal peptides from prolipoproteins. This Janthinobacterium sp. (strain Marseille) (Minibacterium massiliensis) protein is Lipoprotein signal peptidase.